The chain runs to 211 residues: Thiamine-phosphate synthase (211 aa).

Residues 37–41 (QLRIK) and N69 contribute to the 4-amino-2-methyl-5-(diphosphooxymethyl)pyrimidine site. Residues D70 and D89 each coordinate Mg(2+). S108 provides a ligand contact to 4-amino-2-methyl-5-(diphosphooxymethyl)pyrimidine. 134–136 (TQT) is a binding site for 2-[(2R,5Z)-2-carboxy-4-methylthiazol-5(2H)-ylidene]ethyl phosphate. K137 contacts 4-amino-2-methyl-5-(diphosphooxymethyl)pyrimidine. Residues G166 and 186-187 (VS) each bind 2-[(2R,5Z)-2-carboxy-4-methylthiazol-5(2H)-ylidene]ethyl phosphate.

Belongs to the thiamine-phosphate synthase family. Mg(2+) serves as cofactor.

The catalysed reaction is 2-[(2R,5Z)-2-carboxy-4-methylthiazol-5(2H)-ylidene]ethyl phosphate + 4-amino-2-methyl-5-(diphosphooxymethyl)pyrimidine + 2 H(+) = thiamine phosphate + CO2 + diphosphate. It carries out the reaction 2-(2-carboxy-4-methylthiazol-5-yl)ethyl phosphate + 4-amino-2-methyl-5-(diphosphooxymethyl)pyrimidine + 2 H(+) = thiamine phosphate + CO2 + diphosphate. It catalyses the reaction 4-methyl-5-(2-phosphooxyethyl)-thiazole + 4-amino-2-methyl-5-(diphosphooxymethyl)pyrimidine + H(+) = thiamine phosphate + diphosphate. The protein operates within cofactor biosynthesis; thiamine diphosphate biosynthesis; thiamine phosphate from 4-amino-2-methyl-5-diphosphomethylpyrimidine and 4-methyl-5-(2-phosphoethyl)-thiazole: step 1/1. In terms of biological role, condenses 4-methyl-5-(beta-hydroxyethyl)thiazole monophosphate (THZ-P) and 2-methyl-4-amino-5-hydroxymethyl pyrimidine pyrophosphate (HMP-PP) to form thiamine monophosphate (TMP). The sequence is that of Thiamine-phosphate synthase from Escherichia coli O139:H28 (strain E24377A / ETEC).